The primary structure comprises 343 residues: Fructose-bisphosphate aldolase (343 aa).

Ser-53 contributes to the D-glyceraldehyde 3-phosphate binding site. Asp-95 acts as the Proton donor in catalysis. The Zn(2+) site is built by His-96, Asp-131, Glu-161, and His-212. Gly-213 contributes to the dihydroxyacetone phosphate binding site. A Zn(2+)-binding site is contributed by His-252. Residues 253 to 255 and 274 to 277 each bind dihydroxyacetone phosphate; these read GGS and NIDT.

Belongs to the class II fructose-bisphosphate aldolase family. Requires Zn(2+) as cofactor.

The catalysed reaction is beta-D-fructose 1,6-bisphosphate = D-glyceraldehyde 3-phosphate + dihydroxyacetone phosphate. It functions in the pathway carbohydrate degradation; glycolysis; D-glyceraldehyde 3-phosphate and glycerone phosphate from D-glucose: step 4/4. Its function is as follows. Catalyzes the aldol condensation of dihydroxyacetone phosphate (DHAP or glycerone-phosphate) with glyceraldehyde 3-phosphate (G3P) to form fructose 1,6-bisphosphate (FBP) in gluconeogenesis and the reverse reaction in glycolysis. This is Fructose-bisphosphate aldolase (fba) from Streptomyces coelicolor (strain ATCC BAA-471 / A3(2) / M145).